A 127-amino-acid chain; its full sequence is Large ribosomal subunit protein uL22 (127 aa).

It belongs to the universal ribosomal protein uL22 family. In terms of assembly, part of the 50S ribosomal subunit.

In terms of biological role, this protein binds specifically to 23S rRNA; its binding is stimulated by other ribosomal proteins, e.g. L4, L17, and L20. It is important during the early stages of 50S assembly. It makes multiple contacts with different domains of the 23S rRNA in the assembled 50S subunit and ribosome. Its function is as follows. The globular domain of the protein is located near the polypeptide exit tunnel on the outside of the subunit, while an extended beta-hairpin is found that lines the wall of the exit tunnel in the center of the 70S ribosome. This is Large ribosomal subunit protein uL22 from Brucella suis (strain ATCC 23445 / NCTC 10510).